Here is a 336-residue protein sequence, read N- to C-terminus: MSNHLSSDSDISSTESMLCGGIAGMVSRFCIAPLDVVKIRLQLQKDGSRYYRGIFQTMQQIVRDEGVTALWKGNIPAELLYVFYGATQFVTYHHVNQVINAYNETAEKWKISSGAQSFIAGATAGAGATIATYPFDLFRTLFAAQGAKNCNVKNYTSLFQTFKLIYKTEGPLGFFRGVSSSIISIAPYMGLFFASYGRVKDSLDAFSNKHHDLLVSYNLPTKGWQEATAGLCAGTASKALVFPLDTIRKRLQTQGRMDVSYKELSGKPGVQRLLDSYNPFVMARRIIVAEGCRGLYKGFLVSLIKSAPTSAITMYTFEKSLSILRWWKAQGKSLEA.

Solcar repeat units lie at residues 11–98 (ISST…VNQV), 112–202 (SSGA…VKDS), and 221–323 (TKGW…SLSI). Helical transmembrane passes span 17 to 37 (MLCG…LDVV), 66 to 86 (GVTA…FYGA), 118 to 138 (FIAG…FDLF), 177 to 197 (GVSS…ASYG), 228 to 244 (TAGL…VFPL), and 298 to 315 (GFLV…ITMY).

It belongs to the mitochondrial carrier (TC 2.A.29) family.

It localises to the mitochondrion inner membrane. In terms of biological role, mitochondrial transporter that mediates uptake of thiamine pyrophosphate (ThPP) into mitochondria. In Yarrowia lipolytica (strain CLIB 122 / E 150) (Yeast), this protein is Mitochondrial thiamine pyrophosphate carrier 1 (TPC1).